Consider the following 479-residue polypeptide: Wax ester synthase/diacylglycerol acyltransferase 2 (479 aa).

At 1-182 (MAIERQVTEA…VAPKKNKAKN (182 aa)) the chain is on the cytoplasmic side. His-144 acts as the Proton acceptor in catalysis. The chain crosses the membrane as a helical span at residues 183-199 (VCFSLVAWLWFIVRLMF). At 200–479 (HTCVEVIKSI…PKKVFHASKV (280 aa)) the chain is on the lumenal side. N-linked (GlcNAc...) asparagine glycosylation occurs at Asn-253.

It in the N-terminal section; belongs to the long-chain O-acyltransferase family. As to expression, mostly expressed in flowers and siliques and barely in roots and stems.

It localises to the cell membrane. The protein localises to the endoplasmic reticulum membrane. It carries out the reaction an acyl-CoA + a 1,2-diacyl-sn-glycerol = a triacyl-sn-glycerol + CoA. It catalyses the reaction a long chain fatty alcohol + a fatty acyl-CoA = a wax ester + CoA. The protein operates within glycerolipid metabolism; triacylglycerol biosynthesis. It functions in the pathway lipid metabolism. In terms of biological role, bifunctional wax ester synthase/diacylglycerol acyltransferase. Involved in cuticular wax biosynthesis. This chain is Wax ester synthase/diacylglycerol acyltransferase 2, found in Arabidopsis thaliana (Mouse-ear cress).